Here is a 172-residue protein sequence, read N- to C-terminus: Ribosome maturation factor RimM (172 aa).

One can recognise a PRC barrel domain in the interval 96 to 168; that stretch reads DGEFYYHEII…RVDVELLEGL (73 aa).

It belongs to the RimM family. In terms of assembly, binds ribosomal protein uS19.

It is found in the cytoplasm. In terms of biological role, an accessory protein needed during the final step in the assembly of 30S ribosomal subunit, possibly for assembly of the head region. Essential for efficient processing of 16S rRNA. May be needed both before and after RbfA during the maturation of 16S rRNA. It has affinity for free ribosomal 30S subunits but not for 70S ribosomes. The polypeptide is Ribosome maturation factor RimM (Streptococcus suis (strain 05ZYH33)).